The primary structure comprises 242 residues: Carboxy-S-adenosyl-L-methionine synthase (242 aa).

S-adenosyl-L-methionine contacts are provided by residues Y39, 64–66 (GCS), 89–90 (DN), 117–118 (DI), N132, and R199.

It belongs to the class I-like SAM-binding methyltransferase superfamily. Cx-SAM synthase family. Homodimer.

The enzyme catalyses prephenate + S-adenosyl-L-methionine = carboxy-S-adenosyl-L-methionine + 3-phenylpyruvate + H2O. Its function is as follows. Catalyzes the conversion of S-adenosyl-L-methionine (SAM) to carboxy-S-adenosyl-L-methionine (Cx-SAM). This is Carboxy-S-adenosyl-L-methionine synthase from Aliivibrio fischeri (strain MJ11) (Vibrio fischeri).